The chain runs to 477 residues: Ubiquinone biosynthesis monooxygenase COQ6, mitochondrial (477 aa).

The N-terminal 25 residues, 1 to 25 (MLGVLRIQGALASAGQARLLSVRLL), are a transit peptide targeting the mitochondrion.

Belongs to the UbiH/COQ6 family. Component of a multi-subunit COQ enzyme complex. FAD serves as cofactor.

It localises to the mitochondrion inner membrane. The enzyme catalyses a 4-hydroxy-3-(all-trans-polyprenyl)benzoate + 2 reduced [2Fe-2S]-[ferredoxin] + O2 + 2 H(+) = a 3,4-dihydroxy-5-(all-trans-polyprenyl)benzoate + 2 oxidized [2Fe-2S]-[ferredoxin] + H2O. The catalysed reaction is a 2-methoxy-6-(all-trans-polyprenyl)phenol + 2 reduced [2Fe-2S]-[ferredoxin] + O2 + 2 H(+) = a 2-methoxy-6-(all-trans-polyprenyl)benzene-1,4-diol + 2 oxidized [2Fe-2S]-[ferredoxin] + H2O. The protein operates within cofactor biosynthesis; ubiquinone biosynthesis. FAD-dependent monooxygenase required for two non-consecutive steps during ubiquinone biosynthesis. Required for the C5-ring hydroxylation during ubiquinone biosynthesis by catalyzing the hydroxylation of 4-hydroxy-3-(all-trans-polyprenyl)benzoic acid to 3,4-dihydroxy-5-(all-trans-polyprenyl)benzoic acid. Also acts downstream of coq4, for the C1-hydroxylation during ubiquinone biosynthesis by catalyzing the hydroxylation of 2-methoxy-6-(all-trans-polyprenyl)phenol to 2-methoxy-6-(all-trans-polyprenyl)benzene-1,4-diol. The electrons required for the hydroxylation reaction are funneled indirectly to Coq6 from NADPH via a ferredoxin/ferredoxin reductase system. This chain is Ubiquinone biosynthesis monooxygenase COQ6, mitochondrial, found in Drosophila melanogaster (Fruit fly).